Consider the following 127-residue polypeptide: Insulin-like growth factor 3.L (127 aa).

The N-terminal stretch at Met-1 to Ala-49 is a signal peptide. A b region spans residues Ala-49–Val-80. 3 disulfides stabilise this stretch: Cys-61–Cys-99, Cys-73–Cys-112, and Cys-98–Cys-103. The interval Ser-81–Pro-92 is c. The tract at residues Gly-93 to Ala-113 is a. A d region spans residues Ala-114–Gly-121. Positions Arg-122–Ser-127 are cleaved as a propeptide — e peptide.

It belongs to the insulin family.

Its subcellular location is the secreted. Functionally, the insulin-like growth factors, isolated from plasma, are structurally and functionally related to insulin but have a much higher growth-promoting activity. Promotes anterior neural development. The chain is Insulin-like growth factor 3.L from Xenopus laevis (African clawed frog).